Here is a 382-residue protein sequence, read N- to C-terminus: MYIAGVMSGTSLDGIDVALVRIEGSGVESKVELIHFTTVPFCNDIKSEIQQALSIENSNVQLICSLNFKLGLCFANAVKEVCKEANFSLEQLDLIGSHGQTIYHQPKQDGNRIPSTLQIGEPAVIAYETNTTVISNFRTMDMAAGGQGAPLVPYSEVILYRDPSKNRLLQNIGGISNVTVIPNQQSDQNVIAFDTGPGNMIIDEVCQRLFQLSYDQNGEIAKQGRVVDEILTYCMSHPFLKMNPPKSTGREQFGEKFASELLKRFEKHSKENILTTVTMFTANSIVHHYKKFILPYYEIDEVILGGGGSYNSTLVEMLRNGLKDENCAIFIQEDIGYSSEAKEAIAFAILANETHHCNPSNVPSATGAKQSVVLGNITFPPV.

An ATP-binding site is contributed by 9-16 (GTSLDGID).

It belongs to the anhydro-N-acetylmuramic acid kinase family.

The enzyme catalyses 1,6-anhydro-N-acetyl-beta-muramate + ATP + H2O = N-acetyl-D-muramate 6-phosphate + ADP + H(+). It functions in the pathway amino-sugar metabolism; 1,6-anhydro-N-acetylmuramate degradation. Its pathway is cell wall biogenesis; peptidoglycan recycling. In terms of biological role, catalyzes the specific phosphorylation of 1,6-anhydro-N-acetylmuramic acid (anhMurNAc) with the simultaneous cleavage of the 1,6-anhydro ring, generating MurNAc-6-P. Is required for the utilization of anhMurNAc either imported from the medium or derived from its own cell wall murein, and thus plays a role in cell wall recycling. The protein is Anhydro-N-acetylmuramic acid kinase of Bacillus cereus (strain AH820).